An 808-amino-acid polypeptide reads, in one-letter code: Na(+)/H(+) antiporter 2 (808 aa).

Helical transmembrane passes span 12–32, 36–56, 70–90, 105–125, 128–148, 174–194, 203–223, 244–264, and 267–287; these read HVAY…SLFV, LYIG…PHCL, ITLE…SVEL, LLVP…WILV, LNFP…PVLA, CNDG…LYPG, WICV…CIIG, FLAF…MLGV, and LLVS…AAKT. An N-linked (GlcNAc...) asparagine glycan is attached at Asn291. Helical transmembrane passes span 294 to 314, 319 to 339, 361 to 381, 409 to 429, and 432 to 452; these read NVID…ILPW, NPDI…VIFL, AMFI…AITS, VMAC…IVHG, and VAVI…LPTG. 2 disordered regions span residues 478–499 and 541–562; these read QRLD…SGMV and HAST…NGRA. Positions 542 to 561 are enriched in polar residues; it reads ASTNDSHGTTTANLGTSNGR. 2 N-linked (GlcNAc...) asparagine glycosylation sites follow: Asn545 and Asn602. Positions 774–808 are disordered; sequence LHSEDEMADDEAESENDMDYEDSDGPASRFKDHAD. The segment covering 779–797 has biased composition (acidic residues); it reads EMADDEAESENDMDYEDSD.

Belongs to the fungal Na(+)/H(+) exchanger family.

Its subcellular location is the membrane. Its function is as follows. Sodium export from cell, takes up external protons in exchange for internal sodium ions. Seems to be poorly expressed. The protein is Na(+)/H(+) antiporter 2 (SOD22) of Zygosaccharomyces rouxii.